We begin with the raw amino-acid sequence, 233 residues long: 7-cyano-7-deazaguanine synthase (233 aa).

17–27 (LSGGLDSMVCA) is an ATP binding site. Zn(2+) is bound by residues C196, C206, C209, and C212.

Belongs to the QueC family. Requires Zn(2+) as cofactor.

It carries out the reaction 7-carboxy-7-deazaguanine + NH4(+) + ATP = 7-cyano-7-deazaguanine + ADP + phosphate + H2O + H(+). The protein operates within purine metabolism; 7-cyano-7-deazaguanine biosynthesis. Its function is as follows. Catalyzes the ATP-dependent conversion of 7-carboxy-7-deazaguanine (CDG) to 7-cyano-7-deazaguanine (preQ(0)). This is 7-cyano-7-deazaguanine synthase from Novosphingobium aromaticivorans (strain ATCC 700278 / DSM 12444 / CCUG 56034 / CIP 105152 / NBRC 16084 / F199).